Reading from the N-terminus, the 383-residue chain is Xylose/arabinose import ATP-binding protein XacK (383 aa).

Residues 4–240 form the ABC transporter domain; the sequence is LTLDDVTKVY…PNNLFVAGFI (237 aa). 41–48 contacts ATP; sequence GPSGCGKS.

This sequence belongs to the ABC transporter superfamily. Carbohydrate uptake transporter-1 (CUT1) (TC 3.A.1.1) family. In terms of assembly, the complex is composed of two ATP-binding proteins (XacJ and XacK), two transmembrane proteins (XacH and XacI) and a solute-binding protein (XacG).

It is found in the cell membrane. The catalysed reaction is D-xylose(out) + ATP + H2O = D-xylose(in) + ADP + phosphate + H(+). It carries out the reaction L-arabinose(out) + ATP + H2O = L-arabinose(in) + ADP + phosphate + H(+). Functionally, part of the ABC transporter complex XacGHIJK involved in the uptake of xylose and arabinose. Responsible for energy coupling to the transport system. The polypeptide is Xylose/arabinose import ATP-binding protein XacK (Haloferax volcanii (strain ATCC 29605 / DSM 3757 / JCM 8879 / NBRC 14742 / NCIMB 2012 / VKM B-1768 / DS2) (Halobacterium volcanii)).